We begin with the raw amino-acid sequence, 343 residues long: Protein RecA (343 aa).

ATP is bound at residue 66–73; it reads GPESSGKT.

This sequence belongs to the RecA family.

The protein localises to the cytoplasm. In terms of biological role, can catalyze the hydrolysis of ATP in the presence of single-stranded DNA, the ATP-dependent uptake of single-stranded DNA by duplex DNA, and the ATP-dependent hybridization of homologous single-stranded DNAs. It interacts with LexA causing its activation and leading to its autocatalytic cleavage. The chain is Protein RecA from Nitrosomonas eutropha (strain DSM 101675 / C91 / Nm57).